The chain runs to 61 residues: 14-3-3-like protein (61 aa).

This sequence belongs to the 14-3-3 family.

The chain is 14-3-3-like protein from Zea mays (Maize).